Consider the following 293-residue polypeptide: Protein YIF1A (293 aa).

Positions 1-27 (MAYHSAYGVHGSKHRTRAAPDPPPLFD) are disordered. Position 2 is an N-acetylalanine (A2). The Cytoplasmic portion of the chain corresponds to 2–138 (AYHSAYGVHG…PPRKDLNAPD (137 aa)). The residue at position 12 (S12) is a Phosphoserine. The helical transmembrane segment at 139–159 (LYIPTMAFITYVLLAGMALGI) threads the bilayer. Topologically, residues 160-174 (QQRFSPEVLGLCAST) are lumenal. A helical transmembrane segment spans residues 175 to 195 (ALVWVFMEVLALLLGLYLATV). Residues 196–203 (RSELSTFH) lie on the Cytoplasmic side of the membrane. Residues 204-226 (LLAYSGYKYVGMILSVLTGLLFG) form a helical membrane-spanning segment. Topologically, residues 227-229 (SDG) are lumenal. Residues 230 to 249 (YYVALAWTSSALMYFIVRSL) traverse the membrane as a helical segment. Topologically, residues 250–271 (RTAASGPDSMGGPAPRQRLQLY) are cytoplasmic. Residues 272–292 (LTLGAAAFQPLIIYWLTFHLV) form a helical membrane-spanning segment.

The protein belongs to the YIF1 family. In terms of assembly, interacts with YIPF5.

It is found in the endoplasmic reticulum membrane. Its subcellular location is the golgi apparatus membrane. The protein localises to the endoplasmic reticulum-Golgi intermediate compartment membrane. Functionally, possible role in transport between endoplasmic reticulum and Golgi. The sequence is that of Protein YIF1A (Yif1a) from Mus musculus (Mouse).